Reading from the N-terminus, the 159-residue chain is 2-C-methyl-D-erythritol 2,4-cyclodiphosphate synthase (159 aa).

D10 and H12 together coordinate a divalent metal cation. Residues 10 to 12 (DVH) and 36 to 37 (HS) contribute to the 4-CDP-2-C-methyl-D-erythritol 2-phosphate site. H44 serves as a coordination point for a divalent metal cation. 4-CDP-2-C-methyl-D-erythritol 2-phosphate contacts are provided by residues 58-60 (DIG), 63-67 (FPDTD), 102-108 (AQAPKMA), 134-137 (TTTE), F141, and R144.

This sequence belongs to the IspF family. Homotrimer. The cofactor is a divalent metal cation.

The enzyme catalyses 4-CDP-2-C-methyl-D-erythritol 2-phosphate = 2-C-methyl-D-erythritol 2,4-cyclic diphosphate + CMP. The protein operates within isoprenoid biosynthesis; isopentenyl diphosphate biosynthesis via DXP pathway; isopentenyl diphosphate from 1-deoxy-D-xylulose 5-phosphate: step 4/6. Its function is as follows. Involved in the biosynthesis of isopentenyl diphosphate (IPP) and dimethylallyl diphosphate (DMAPP), two major building blocks of isoprenoid compounds. Catalyzes the conversion of 4-diphosphocytidyl-2-C-methyl-D-erythritol 2-phosphate (CDP-ME2P) to 2-C-methyl-D-erythritol 2,4-cyclodiphosphate (ME-CPP) with a corresponding release of cytidine 5-monophosphate (CMP). This chain is 2-C-methyl-D-erythritol 2,4-cyclodiphosphate synthase, found in Idiomarina loihiensis (strain ATCC BAA-735 / DSM 15497 / L2-TR).